The primary structure comprises 456 residues: N(6)-adenosine-methyltransferase non-catalytic subunit METTL14 (456 aa).

The interval threonine 50–aspartate 75 is disordered. 2 interaction with METTL3 regions span residues arginine 135–aspartate 136 and serine 237–glycine 238. The segment at arginine 245–arginine 254 is positively charged region required for RNA-binding. Interaction with METTL3 stretches follow at residues arginine 255–aspartate 258 and lysine 278–histidine 287. The positively charged region required for RNA-binding stretch occupies residues lysine 297 to arginine 298. An interaction with METTL3 region spans residues asparagine 308–aspartate 312. A disordered region spans residues glutamate 393–arginine 456. Position 399 is a phosphoserine (serine 399). Over residues glycine 409–alanine 423 the composition is skewed to gly residues. Over residues arginine 425–glycine 440 the composition is skewed to basic and acidic residues. The span at phenylalanine 441–arginine 450 shows a compositional bias: gly residues.

This sequence belongs to the MT-A70-like family. Heterodimer; heterodimerizes with METTL3 to form an antiparallel heterodimer that constitutes an active methyltransferase. Component of the WMM complex, a N6-methyltransferase complex composed of a catalytic subcomplex, named MAC, and of an associated subcomplex, named MACOM. The MAC subcomplex is composed of METTL3 and METTL14. The MACOM subcomplex is composed of WTAP, ZC3H13, CBLL1/HAKAI, VIRMA, and, in some cases of RBM15 (RBM15 or RBM15B).

It is found in the nucleus. The METTL3-METTL14 heterodimer forms a N6-methyltransferase complex that methylates adenosine residues at the N(6) position of some mRNAs and regulates the circadian clock, differentiation of embryonic stem cells and cortical neurogenesis. In the heterodimer formed with METTL3, METTL14 constitutes the RNA-binding scaffold that recognizes the substrate rather than the catalytic core. N6-methyladenosine (m6A), which takes place at the 5'-[AG]GAC-3' consensus sites of some mRNAs, plays a role in mRNA stability and processing. M6A acts as a key regulator of mRNA stability by promoting mRNA destabilization and degradation. In embryonic stem cells (ESCs), m6A methylation of mRNAs encoding key naive pluripotency-promoting transcripts results in transcript destabilization. M6A regulates spermatogonial differentiation and meiosis and is essential for male fertility and spermatogenesis. M6A also regulates cortical neurogenesis: m6A methylation of transcripts related to transcription factors, neural stem cells, the cell cycle and neuronal differentiation during brain development promotes their destabilization and decay, promoting differentiation of radial glial cells. This chain is N(6)-adenosine-methyltransferase non-catalytic subunit METTL14, found in Homo sapiens (Human).